A 503-amino-acid polypeptide reads, in one-letter code: Glycerol kinase (503 aa).

ADP is bound at residue threonine 14. ATP is bound by residues threonine 14, threonine 15, and serine 16. A sn-glycerol 3-phosphate-binding site is contributed by threonine 14. Arginine 18 lines the ADP pocket. Arginine 84, glutamate 85, tyrosine 136, and aspartate 246 together coordinate sn-glycerol 3-phosphate. Arginine 84, glutamate 85, tyrosine 136, aspartate 246, and glutamine 247 together coordinate glycerol. ADP-binding residues include threonine 268 and glycine 311. ATP is bound by residues threonine 268, glycine 311, glutamine 315, and glycine 412. ADP is bound by residues glycine 412 and asparagine 416.

This sequence belongs to the FGGY kinase family. In terms of assembly, homotetramer and homodimer (in equilibrium). Heterodimer with EIIA-Glc. Binds 1 zinc ion per glycerol kinase EIIA-Glc dimer. The zinc ion is important for dimerization.

The enzyme catalyses glycerol + ATP = sn-glycerol 3-phosphate + ADP + H(+). Its pathway is polyol metabolism; glycerol degradation via glycerol kinase pathway; sn-glycerol 3-phosphate from glycerol: step 1/1. Its activity is regulated as follows. Activity of this regulatory enzyme is affected by several metabolites. Allosterically and non-competitively inhibited by fructose 1,6-bisphosphate (FBP) and unphosphorylated phosphocarrier protein EIIA-Glc (III-Glc), an integral component of the bacterial phosphotransferase (PTS) system. Key enzyme in the regulation of glycerol uptake and metabolism. Catalyzes the phosphorylation of glycerol to yield sn-glycerol 3-phosphate. This chain is Glycerol kinase, found in Klebsiella pneumoniae subsp. pneumoniae (strain ATCC 700721 / MGH 78578).